We begin with the raw amino-acid sequence, 226 residues long: 7-cyano-7-deazaguanine synthase (226 aa).

Residue 9–19 (YSGGLDSTTCL) coordinates ATP. Zn(2+) is bound by residues Cys189, Cys199, Cys202, and Cys205.

It belongs to the QueC family. Zn(2+) is required as a cofactor.

It carries out the reaction 7-carboxy-7-deazaguanine + NH4(+) + ATP = 7-cyano-7-deazaguanine + ADP + phosphate + H2O + H(+). The protein operates within purine metabolism; 7-cyano-7-deazaguanine biosynthesis. In terms of biological role, catalyzes the ATP-dependent conversion of 7-carboxy-7-deazaguanine (CDG) to 7-cyano-7-deazaguanine (preQ(0)). This Pelobacter propionicus (strain DSM 2379 / NBRC 103807 / OttBd1) protein is 7-cyano-7-deazaguanine synthase.